Reading from the N-terminus, the 124-residue chain is MSEELPQIEIVQEGDNTTFAKPGDTVTIHYDGKLTNGKEFDSSRKRGKPFTCTVGVGQVIKGWDISLTNNYGKGGANLPKISKGTKAILTIPPNLAYGPRGIPPIIGPNETLVFEVELLGVNGQ.

One can recognise a PPIase FKBP-type domain in the interval 23–122; sequence GDTVTIHYDG…VFEVELLGVN (100 aa).

Belongs to the FKBP-type PPIase family. FKBP1 subfamily.

The protein resides in the cytoplasm. It carries out the reaction [protein]-peptidylproline (omega=180) = [protein]-peptidylproline (omega=0). Inhibited by rapamycin. Its function is as follows. PPIases accelerate the folding of proteins. It catalyzes the cis-trans isomerization of proline imidic peptide bonds in oligopeptides. The chain is FK506-binding protein 1 (RBP1) from Candida albicans (strain SC5314 / ATCC MYA-2876) (Yeast).